The following is a 282-amino-acid chain: Biotin synthase (282 aa).

Residues 1–228 (MQEIFLCSIS…NARLMAAGGR (228 aa)) form the Radical SAM core domain. [4Fe-4S] cluster contacts are provided by Cys17, Cys21, and Cys24. [2Fe-2S] cluster is bound by residues Cys61, Cys96, Cys154, and Arg221.

Belongs to the radical SAM superfamily. Biotin synthase family. In terms of assembly, homodimer. It depends on [4Fe-4S] cluster as a cofactor. The cofactor is [2Fe-2S] cluster.

The enzyme catalyses (4R,5S)-dethiobiotin + (sulfur carrier)-SH + 2 reduced [2Fe-2S]-[ferredoxin] + 2 S-adenosyl-L-methionine = (sulfur carrier)-H + biotin + 2 5'-deoxyadenosine + 2 L-methionine + 2 oxidized [2Fe-2S]-[ferredoxin]. The protein operates within cofactor biosynthesis; biotin biosynthesis; biotin from 7,8-diaminononanoate: step 2/2. Functionally, catalyzes the conversion of dethiobiotin (DTB) to biotin by the insertion of a sulfur atom into dethiobiotin via a radical-based mechanism. The protein is Biotin synthase of Helicobacter acinonychis (strain Sheeba).